The sequence spans 470 residues: 3-isopropylmalate dehydratase large subunit (470 aa).

Cysteine 351, cysteine 411, and cysteine 414 together coordinate [4Fe-4S] cluster.

The protein belongs to the aconitase/IPM isomerase family. LeuC type 1 subfamily. In terms of assembly, heterodimer of LeuC and LeuD. It depends on [4Fe-4S] cluster as a cofactor.

It carries out the reaction (2R,3S)-3-isopropylmalate = (2S)-2-isopropylmalate. The protein operates within amino-acid biosynthesis; L-leucine biosynthesis; L-leucine from 3-methyl-2-oxobutanoate: step 2/4. In terms of biological role, catalyzes the isomerization between 2-isopropylmalate and 3-isopropylmalate, via the formation of 2-isopropylmaleate. The polypeptide is 3-isopropylmalate dehydratase large subunit (Rhodopseudomonas palustris (strain HaA2)).